Reading from the N-terminus, the 786-residue chain is Pentatricopeptide repeat-containing protein At2g22070 (786 aa).

PPR repeat units follow at residues 48-78 (SVYL…MPLR), 79-109 (TAFS…LPQR), 110-144 (DSVS…GIEP), 145-179 (TQFT…GLRG), 180-214 (NVSV…DISS), 215-241 (WNAM…MAER), 242-276 (DIVT…SLLS), 278-312 (DRFT…GFDI), 313-347 (SGIV…DLKI), 350-376 (FTAL…LKDR), 377-411 (DVVA…GQRP), 412-446 (NSYT…GEIY), 447-477 (SVSV…IRCE), 479-513 (DTVS…GLRP), 514-548 (DHIT…DKII), and 550-580 (TLSH…MPIE). The interval 585–660 (TWGSLLSACR…EQGFSWIEVK (76 aa)) is type E motif. Residues 661 to 691 (HKVHVFGVEDGTHPEKNEIYMTMKKIWDEIK) are type E(+) motif. The tract at residues 692–786 (KMGYVPDTAS…DGFCSCRDYW (95 aa)) is type DYW motif.

It belongs to the PPR family. PCMP-H subfamily.

This is Pentatricopeptide repeat-containing protein At2g22070 (PCMP-H41) from Arabidopsis thaliana (Mouse-ear cress).